Consider the following 602-residue polypeptide: MVSTKVKPTTTTTPTTTVNKTTQPTTTTTASKKVKQTKQSKAQAKEIQELASTPSVKQIQSQKVLVPKLEETKPITPPDQEEEDQEEEEQEQEEEENENNDNNTGNVSEKELGISKESIEFSNLPIEENTKKSIEEMGFKKMTPIQAKSILPLLEGKDLLGAARTGSGKTLAFLIPAIEVLVKSNFKPRNGTGVIIISPTRELALQIYGVARELMKYHTQTHGIVIGGASKKPEEERLEKGVNLLVATPGRLLDHLQNTKGFITKNLKCLIIDEADRILEVGFEEEMHQIIKKVPKTRQTMLFSATQTRKVDDIAKVSLNNSPVYVGVDDEREISTVEGLEQGYVVCPSERRFLLLYTFLKKNLSKKIIVFLSSCNAVKYTAELLNYIDIPVLELHGRQKQQKRTNTFYEFVNAEKGILICTDVAARGLDIPSVDWIIQYDPPDDPKEYIHRVGRTARGVGKKGRALLFLLPKELGFLKYLKLAKVPLNEYEFPKSKIANVQDQLEKVVSQNFYLYNSARDAYKAYICAYASHSLKDIFDVNALDLQCVAKAFGFLDPPKVNLNVNSSGKADFQKKSNNKSGFAQKQYGSKFPPKDGRQFDR.

Positions 1–31 (MVSTKVKPTTTTTPTTTVNKTTQPTTTTTAS) are enriched in low complexity. Residues 1–108 (MVSTKVKPTT…NNDNNTGNVS (108 aa)) are disordered. Polar residues predominate over residues 50 to 63 (LASTPSVKQIQSQK). Residues 79-99 (DQEEEDQEEEEQEQEEEENEN) show a composition bias toward acidic residues. The short motif at 119–147 (IEFSNLPIEENTKKSIEEMGFKKMTPIQA) is the Q motif element. In terms of domain architecture, Helicase ATP-binding spans 150-325 (ILPLLEGKDL…KVSLNNSPVY (176 aa)). An ATP-binding site is contributed by 163–170 (ARTGSGKT). A DEAD box motif is present at residues 273-276 (DEAD). One can recognise a Helicase C-terminal domain in the interval 339-509 (GLEQGYVVCP…NVQDQLEKVV (171 aa)). The interval 568–602 (SGKADFQKKSNNKSGFAQKQYGSKFPPKDGRQFDR) is disordered. Positions 579–588 (NKSGFAQKQY) are enriched in polar residues. Positions 593–602 (PPKDGRQFDR) are enriched in basic and acidic residues.

It belongs to the DEAD box helicase family. DDX18/HAS1 subfamily.

It localises to the nucleus. The protein localises to the nucleolus. It is found in the chromosome. The catalysed reaction is ATP + H2O = ADP + phosphate + H(+). ATP-binding RNA helicase which may be involved in the ribosome biogenesis. The chain is Probable ATP-dependent RNA helicase ddx18 (ddx18) from Dictyostelium discoideum (Social amoeba).